The chain runs to 146 residues: Hemoglobin subunit beta-1 (146 aa).

The Globin domain occupies 2-146 (HWTEKERTII…VVSALGKQYH (145 aa)). Positions 63 and 92 each coordinate heme b.

This sequence belongs to the globin family. Hb1 is a heterotetramer of two alpha chains and two beta-1 chains. In terms of tissue distribution, red blood cells.

Functionally, involved in oxygen transport from gills to the various peripheral tissues. This chain is Hemoglobin subunit beta-1, found in Dissostichus eleginoides (Patagonian toothfish).